A 363-amino-acid chain; its full sequence is NAD(P)H-quinone oxidoreductase subunit 1, chloroplastic (363 aa).

Helical transmembrane passes span 30–50 (FIPI…IVWL), 104–124 (IAVI…HLVL), 129–149 (IGVF…LMSG), 248–268 (YSGI…LVSS), 269–289 (LFVT…IFVF), 300–320 (VFEP…FLFI), and 336–356 (LLNL…LLTT).

Belongs to the complex I subunit 1 family. In terms of assembly, NDH is composed of at least 16 different subunits, 5 of which are encoded in the nucleus.

It is found in the plastid. The protein resides in the chloroplast thylakoid membrane. It carries out the reaction a plastoquinone + NADH + (n+1) H(+)(in) = a plastoquinol + NAD(+) + n H(+)(out). The enzyme catalyses a plastoquinone + NADPH + (n+1) H(+)(in) = a plastoquinol + NADP(+) + n H(+)(out). Its function is as follows. NDH shuttles electrons from NAD(P)H:plastoquinone, via FMN and iron-sulfur (Fe-S) centers, to quinones in the photosynthetic chain and possibly in a chloroplast respiratory chain. The immediate electron acceptor for the enzyme in this species is believed to be plastoquinone. Couples the redox reaction to proton translocation, and thus conserves the redox energy in a proton gradient. This is NAD(P)H-quinone oxidoreductase subunit 1, chloroplastic from Morus indica (Mulberry).